A 524-amino-acid polypeptide reads, in one-letter code: Probable endopeptidase p60 (524 aa).

The signal sequence occupies residues 1-27 (MNMKKATIAATAGIAVTAFAAPTIASA). In terms of domain architecture, LysM 1 spans 28 to 71 (STVVVEAGDTLWGIAQSKGTTVDALKKANNLTSDKIVPGQKLQV). An SH3b domain is found at 78-142 (KTEKSVSATW…VNGKYLGDAV (65 aa)). The interval 150–188 (QEVKQETTKQTAPAAETKTEVKQSTPAPTAPKAAETKTA) is disordered. The segment covering 174 to 188 (TPAPTAPKAAETKTA) has biased composition (low complexity). In terms of domain architecture, LysM 2 spans 196-239 (TTHTVKSGDTIWALSVKYGASVQDLMSWNNLSSSSIYVGQKIAV). Low complexity predominate over residues 272 to 299 (NTNTTVKKEVTTQTQTNTTKAPAQAAKP). Residues 272–313 (NTNTTVKKEVTTQTQTNTTKAPAQAAKPAPAPAPAPTVNTNA) form a disordered region. One can recognise a LysM 3 domain in the interval 314–357 (STYTVKSGDSLSKIANTFGTSVSKIKALNNLTSDNLQVGTVLKV). Residues 360–408 (TVPTTNTNNNSNTTAPTTNTSNNNTSSNTSTPSKNTNTNTNQGSSNSAS) form a disordered region. Over residues 362-408 (PTTNTNNNSNTTAPTTNTSNNNTSSNTSTPSKNTNTNTNQGSSNSAS) the composition is skewed to low complexity. Residues 406 to 524 (SASASALIAE…GKYLVGFGRV (119 aa)) enclose the NlpC/P60 domain. Cys-436 (nucleophile) is an active-site residue. The active-site Proton acceptor is the His-486. Asn-498 is an active-site residue.

Belongs to the peptidase C40 family.

Functionally, this major extracellular protein may be involved in the invasion of non-professional phagocytic cells by Listeria. The sequence is that of Probable endopeptidase p60 (iap) from Listeria welshimeri.